The sequence spans 409 residues: Carbamoyl phosphate synthase arginine-specific small chain (409 aa).

The Glutamine amidotransferase type-1 domain maps to 197 to 389 (NVALIDCGVK…FDNMSQYRAL (193 aa)). Residue cysteine 277 is the Nucleophile of the active site. Residues histidine 362 and glutamate 364 contribute to the active site.

The protein belongs to the CarA family. Heterodimer composed of 2 chains; the small (or glutamine) chain promotes the hydrolysis of glutamine to ammonia, which is used by the large (or ammonia) chain to synthesize carbamoyl phosphate.

The protein localises to the cytoplasm. The catalysed reaction is hydrogencarbonate + L-glutamine + 2 ATP + H2O = carbamoyl phosphate + L-glutamate + 2 ADP + phosphate + 2 H(+). The enzyme catalyses L-glutamine + H2O = L-glutamate + NH4(+). It functions in the pathway amino-acid biosynthesis; L-arginine biosynthesis; carbamoyl phosphate from bicarbonate: step 1/1. In terms of biological role, small subunit of the arginine-specific carbamoyl phosphate synthase (CPSase). CPSase catalyzes the formation of carbamoyl phosphate from the ammonia moiety of glutamine, carbonate, and phosphate donated by ATP, constituting the first step of 2 biosynthetic pathways, one leading to arginine and/or urea and the other to pyrimidine nucleotides. The small subunit (glutamine amidotransferase) binds and cleaves glutamine to supply the large subunit with the substrate ammonia. The protein is Carbamoyl phosphate synthase arginine-specific small chain (CPA1) of Kluyveromyces lactis (strain ATCC 8585 / CBS 2359 / DSM 70799 / NBRC 1267 / NRRL Y-1140 / WM37) (Yeast).